The primary structure comprises 251 residues: Cell division protein ZapD (251 aa).

The protein belongs to the ZapD family. In terms of assembly, interacts with FtsZ.

The protein resides in the cytoplasm. Cell division factor that enhances FtsZ-ring assembly. Directly interacts with FtsZ and promotes bundling of FtsZ protofilaments, with a reduction in FtsZ GTPase activity. The sequence is that of Cell division protein ZapD from Burkholderia cenocepacia (strain ATCC BAA-245 / DSM 16553 / LMG 16656 / NCTC 13227 / J2315 / CF5610) (Burkholderia cepacia (strain J2315)).